Here is a 379-residue protein sequence, read N- to C-terminus: MRVVLAGGGTAGHVEPALALADALRRINPDTQVLCLGTKRGLEQRLVPMRGYELAEIPAVPLPRKLTPQLLSVPGRLANAISTAAKHLDRVQADILVGFGGYVATPGYLAARSRRIPIVVHEANPLPGLANRLGARLTPHVFTGHPHTEIRNGRYIGIPLRTRISNLDRLAVGDKARSKFGLRPDLPTLLIFGGSQGAQAINQAAFDSAEDFYQAGIQVLHVVGPKNADGPEDRTRGGVPYVVVPYVDEMELAYAAADIAMCRSGALTCAELTAVGLPAVFVPLAIGNGEQRLNAEPIVQAGGGLMVANSELSRDWIREHLIPLLTDTDRIVAMSEAAARLGRRDADMALAREVIAIARGERPTPEMPIDYSEESGDTR.

Residues 10 to 12 (TAG), Asn124, Arg161, Ser195, and Gln291 each bind UDP-N-acetyl-alpha-D-glucosamine.

Belongs to the glycosyltransferase 28 family. MurG subfamily.

It localises to the cell membrane. It carries out the reaction di-trans,octa-cis-undecaprenyl diphospho-N-acetyl-alpha-D-muramoyl-L-alanyl-D-glutamyl-meso-2,6-diaminopimeloyl-D-alanyl-D-alanine + UDP-N-acetyl-alpha-D-glucosamine = di-trans,octa-cis-undecaprenyl diphospho-[N-acetyl-alpha-D-glucosaminyl-(1-&gt;4)]-N-acetyl-alpha-D-muramoyl-L-alanyl-D-glutamyl-meso-2,6-diaminopimeloyl-D-alanyl-D-alanine + UDP + H(+). Its pathway is cell wall biogenesis; peptidoglycan biosynthesis. Functionally, cell wall formation. Catalyzes the transfer of a GlcNAc subunit on undecaprenyl-pyrophosphoryl-MurNAc-pentapeptide (lipid intermediate I) to form undecaprenyl-pyrophosphoryl-MurNAc-(pentapeptide)GlcNAc (lipid intermediate II). The chain is UDP-N-acetylglucosamine--N-acetylmuramyl-(pentapeptide) pyrophosphoryl-undecaprenol N-acetylglucosamine transferase from Thermobifida fusca (strain YX).